Here is a 335-residue protein sequence, read N- to C-terminus: Holliday junction branch migration complex subunit RuvB (335 aa).

The tract at residues 4–184 (ADRLIDATEK…FGIVQRLEFY (181 aa)) is large ATPase domain (RuvB-L). Residues isoleucine 23, arginine 24, glycine 65, lysine 68, threonine 69, threonine 70, 131-133 (EDY), arginine 174, tyrosine 184, and arginine 221 contribute to the ATP site. Threonine 69 is a Mg(2+) binding site. The tract at residues 185-255 (SVEDLSYIVG…VAELALNMID (71 aa)) is small ATPAse domain (RuvB-S). Residues 258–335 (KSGFDYMDRK…HHFGLLPKQD (78 aa)) form a head domain (RuvB-H) region. Arginine 313 and arginine 318 together coordinate DNA.

Belongs to the RuvB family. As to quaternary structure, homohexamer. Forms an RuvA(8)-RuvB(12)-Holliday junction (HJ) complex. HJ DNA is sandwiched between 2 RuvA tetramers; dsDNA enters through RuvA and exits via RuvB. An RuvB hexamer assembles on each DNA strand where it exits the tetramer. Each RuvB hexamer is contacted by two RuvA subunits (via domain III) on 2 adjacent RuvB subunits; this complex drives branch migration. In the full resolvosome a probable DNA-RuvA(4)-RuvB(12)-RuvC(2) complex forms which resolves the HJ.

It localises to the cytoplasm. The catalysed reaction is ATP + H2O = ADP + phosphate + H(+). In terms of biological role, the RuvA-RuvB-RuvC complex processes Holliday junction (HJ) DNA during genetic recombination and DNA repair, while the RuvA-RuvB complex plays an important role in the rescue of blocked DNA replication forks via replication fork reversal (RFR). RuvA specifically binds to HJ cruciform DNA, conferring on it an open structure. The RuvB hexamer acts as an ATP-dependent pump, pulling dsDNA into and through the RuvAB complex. RuvB forms 2 homohexamers on either side of HJ DNA bound by 1 or 2 RuvA tetramers; 4 subunits per hexamer contact DNA at a time. Coordinated motions by a converter formed by DNA-disengaged RuvB subunits stimulates ATP hydrolysis and nucleotide exchange. Immobilization of the converter enables RuvB to convert the ATP-contained energy into a lever motion, pulling 2 nucleotides of DNA out of the RuvA tetramer per ATP hydrolyzed, thus driving DNA branch migration. The RuvB motors rotate together with the DNA substrate, which together with the progressing nucleotide cycle form the mechanistic basis for DNA recombination by continuous HJ branch migration. Branch migration allows RuvC to scan DNA until it finds its consensus sequence, where it cleaves and resolves cruciform DNA. This Pseudoalteromonas translucida (strain TAC 125) protein is Holliday junction branch migration complex subunit RuvB.